We begin with the raw amino-acid sequence, 316 residues long: tRNA dimethylallyltransferase (316 aa).

ATP is bound at residue 17–24 (GPTASGKT). 19-24 (TASGKT) serves as a coordination point for substrate. Interaction with substrate tRNA stretches follow at residues 42-45 (DSAL), 166-170 (QRLSR), and 247-252 (RCVGYR).

The protein belongs to the IPP transferase family. In terms of assembly, monomer. Mg(2+) is required as a cofactor.

The enzyme catalyses adenosine(37) in tRNA + dimethylallyl diphosphate = N(6)-dimethylallyladenosine(37) in tRNA + diphosphate. In terms of biological role, catalyzes the transfer of a dimethylallyl group onto the adenine at position 37 in tRNAs that read codons beginning with uridine, leading to the formation of N6-(dimethylallyl)adenosine (i(6)A). In Salmonella paratyphi A (strain ATCC 9150 / SARB42), this protein is tRNA dimethylallyltransferase.